The sequence spans 143 residues: Large ribosomal subunit protein uL13 (143 aa).

Belongs to the universal ribosomal protein uL13 family. In terms of assembly, part of the 50S ribosomal subunit.

Functionally, this protein is one of the early assembly proteins of the 50S ribosomal subunit, although it is not seen to bind rRNA by itself. It is important during the early stages of 50S assembly. The sequence is that of Large ribosomal subunit protein uL13 from Prochlorococcus marinus subsp. pastoris (strain CCMP1986 / NIES-2087 / MED4).